The sequence spans 156 residues: 6,7-dimethyl-8-ribityllumazine synthase (156 aa).

5-amino-6-(D-ribitylamino)uracil contacts are provided by residues F23, 57–59, and 81–83; these read AYE and AII. 86-87 contributes to the (2S)-2-hydroxy-3-oxobutyl phosphate binding site; sequence GT. H89 acts as the Proton donor in catalysis. F114 provides a ligand contact to 5-amino-6-(D-ribitylamino)uracil. R128 serves as a coordination point for (2S)-2-hydroxy-3-oxobutyl phosphate.

It belongs to the DMRL synthase family.

The enzyme catalyses (2S)-2-hydroxy-3-oxobutyl phosphate + 5-amino-6-(D-ribitylamino)uracil = 6,7-dimethyl-8-(1-D-ribityl)lumazine + phosphate + 2 H2O + H(+). The protein operates within cofactor biosynthesis; riboflavin biosynthesis; riboflavin from 2-hydroxy-3-oxobutyl phosphate and 5-amino-6-(D-ribitylamino)uracil: step 1/2. Functionally, catalyzes the formation of 6,7-dimethyl-8-ribityllumazine by condensation of 5-amino-6-(D-ribitylamino)uracil with 3,4-dihydroxy-2-butanone 4-phosphate. This is the penultimate step in the biosynthesis of riboflavin. This chain is 6,7-dimethyl-8-ribityllumazine synthase, found in Helicobacter pylori (strain G27).